A 901-amino-acid chain; its full sequence is Protein translocase subunit SecA (901 aa).

Residues glutamine 87, 105 to 109 (GEGKT), and aspartate 512 each bind ATP. A disordered region spans residues 852 to 901 (AQMQQLSHQSDDEAAAEDLAAQTGERKVGRNDPCPCGSGKKYKQCHGRLS). The Zn(2+) site is built by cysteine 885, cysteine 887, cysteine 896, and histidine 897. Residues 891–901 (KKYKQCHGRLS) show a composition bias toward basic residues.

Belongs to the SecA family. In terms of assembly, monomer and homodimer. Part of the essential Sec protein translocation apparatus which comprises SecA, SecYEG and auxiliary proteins SecDF-YajC and YidC. The cofactor is Zn(2+).

The protein localises to the cell inner membrane. It localises to the cytoplasm. The catalysed reaction is ATP + H2O + cellular proteinSide 1 = ADP + phosphate + cellular proteinSide 2.. Part of the Sec protein translocase complex. Interacts with the SecYEG preprotein conducting channel. Has a central role in coupling the hydrolysis of ATP to the transfer of proteins into and across the cell membrane, serving both as a receptor for the preprotein-SecB complex and as an ATP-driven molecular motor driving the stepwise translocation of polypeptide chains across the membrane. The protein is Protein translocase subunit SecA of Klebsiella pneumoniae (strain 342).